Consider the following 474-residue polypeptide: 3-isopropylmalate dehydratase large subunit (474 aa).

Residues 293–313 (GTTPGQGIGITEEIPAPEDLP) are disordered. Positions 348, 408, and 411 each coordinate [4Fe-4S] cluster.

Belongs to the aconitase/IPM isomerase family. LeuC type 1 subfamily. Heterodimer of LeuC and LeuD. It depends on [4Fe-4S] cluster as a cofactor.

The catalysed reaction is (2R,3S)-3-isopropylmalate = (2S)-2-isopropylmalate. Its pathway is amino-acid biosynthesis; L-leucine biosynthesis; L-leucine from 3-methyl-2-oxobutanoate: step 2/4. Functionally, catalyzes the isomerization between 2-isopropylmalate and 3-isopropylmalate, via the formation of 2-isopropylmaleate. The sequence is that of 3-isopropylmalate dehydratase large subunit from Natronomonas pharaonis (strain ATCC 35678 / DSM 2160 / CIP 103997 / JCM 8858 / NBRC 14720 / NCIMB 2260 / Gabara) (Halobacterium pharaonis).